A 400-amino-acid chain; its full sequence is Nicotinate phosphoribosyltransferase (400 aa).

His220 is subject to Phosphohistidine; by autocatalysis.

It belongs to the NAPRTase family. In terms of processing, transiently phosphorylated on a His residue during the reaction cycle. Phosphorylation strongly increases the affinity for substrates and increases the rate of nicotinate D-ribonucleotide production. Dephosphorylation regenerates the low-affinity form of the enzyme, leading to product release.

The enzyme catalyses nicotinate + 5-phospho-alpha-D-ribose 1-diphosphate + ATP + H2O = nicotinate beta-D-ribonucleotide + ADP + phosphate + diphosphate. The protein operates within cofactor biosynthesis; NAD(+) biosynthesis; nicotinate D-ribonucleotide from nicotinate: step 1/1. Its function is as follows. Catalyzes the synthesis of beta-nicotinate D-ribonucleotide from nicotinate and 5-phospho-D-ribose 1-phosphate at the expense of ATP. This Escherichia coli O45:K1 (strain S88 / ExPEC) protein is Nicotinate phosphoribosyltransferase.